A 252-amino-acid chain; its full sequence is Protein lin-28 homolog B (252 aa).

Residues 1 to 30 (MAEGGAARGTREEQGKLPEQEEEEEEDPQV) are disordered. Basic and acidic residues predominate over residues 9–19 (GTREEQGKLPE). In terms of domain architecture, CSD spans 32 to 105 (LGSGHCKWFN…GFESLRVTGP (74 aa)). 2 CCHC-type zinc fingers span residues 130–147 (DRCYNCGGLDHHAKECNL) and 152–169 (KKCHYCQSTMHMVANCPH). Zn(2+) contacts are provided by C132, C135, H140, C145, C154, C157, H162, and C167. Positions 172–252 (VPQHPTTSQG…KGPSVQKKKK (81 aa)) are disordered. Basic and acidic residues predominate over residues 213–222 (GRSELSERSS). The segment covering 225-238 (PQEASLSKISTSPE) has biased composition (polar residues).

It belongs to the lin-28 family.

Its subcellular location is the nucleus. The protein localises to the nucleolus. Functionally, suppressor of specific microRNA (miRNA) biogenesis. Binds target primary miRNA transcripts and sequester them in the nucleolus, away from the microprocessor complex, hence preventing their processing into mature miRNA. The specific interaction with target pri-miRNAs occurs via an 5'-GGAG-3' motif in the pre-miRNA terminal loop. This chain is Protein lin-28 homolog B (lin28b), found in Xenopus laevis (African clawed frog).